Consider the following 533-residue polypeptide: MAVAGAMVMSGGVLLLLLAFTCAAYNDAGELPPISRRSFPKGFIFGTSSSSYQFEGAAAKGGRGPSIWDTFTHQYPDKITDKSNGDGACNSYHLYKEDVRIMKEMGMDAYRFSISWSRILPNGSLSGGVNREGINYYNNLINELLSKEVQPFATLFHFDTPQALEDKYKGFLSPNIINDYKDYAEICFKEFGDRVKHWITFNEPWNFCSMGYASGTMAPGRCSSWEKGKCRVGDSGREPYTACHHQLLAHAETVRLYKEKYQFTEEAIRQSPFIRDNNLNRRSAKALQKGRIGIILNSEWFVPFSQSKSSNDAARRVLDFMLGWFMDPLIRGDYPLSMRELVGNRLPEFSKEQSEMVKGAFDFIGLNYYASSYADNDPPSYGHNNSYNTDSHAKITGSRNGIPIGPQAASFWFYIYPEGLRELLLHIKENYGNPTIYITENGVDEINNKTMRLKEALKDDIRIEYYHKHLLALLSAMRDGANVKGYFAWSLLDNFEWSEGYTVRFGINFVDYDNGMKRYPKNSARWFKKFLRK.

An N-terminal signal peptide occupies residues 1-23 (MAVAGAMVMSGGVLLLLLAFTCA). An a beta-D-glucoside-binding site is contributed by glutamine 53. N-linked (GlcNAc...) asparagine glycosylation occurs at asparagine 122. Residues histidine 157 and 202 to 203 (NE) each bind a beta-D-glucoside. Glutamate 203 serves as the catalytic Proton donor. A disulfide bridge links cysteine 222 with cysteine 230. A beta-D-glucoside is bound at residue tyrosine 369. Asparagine 384 carries N-linked (GlcNAc...) asparagine glycosylation. Glutamate 440 serves as a coordination point for a beta-D-glucoside. The Nucleophile role is filled by glutamate 440. Asparagine 448 carries N-linked (GlcNAc...) asparagine glycosylation. Residues tryptophan 489, 496 to 497 (EW), and phenylalanine 505 contribute to the a beta-D-glucoside site.

It belongs to the glycosyl hydrolase 1 family.

The enzyme catalyses Hydrolysis of terminal, non-reducing beta-D-glucosyl residues with release of beta-D-glucose.. In Oryza sativa subsp. japonica (Rice), this protein is Beta-glucosidase 10 (BGLU10).